A 161-amino-acid chain; its full sequence is Nucleotide-binding protein BamMC406_2474 (161 aa).

It belongs to the YajQ family.

Its function is as follows. Nucleotide-binding protein. In Burkholderia ambifaria (strain MC40-6), this protein is Nucleotide-binding protein BamMC406_2474.